Consider the following 161-residue polypeptide: Globin CTT-VIIB-6 (161 aa).

The N-terminal stretch at 1–16 is a signal peptide; it reads MKFFAVLALCIVGAIA. The region spanning 18–161 is the Globin domain; it reads PLTADEASLV…NTFAIVVPRL (144 aa). Heme b contacts are provided by H76 and H111.

Belongs to the globin family. As to quaternary structure, homodimer.

The chain is Globin CTT-VIIB-6 (CTT-7B6) from Chironomus thummi thummi (Midge).